A 158-amino-acid polypeptide reads, in one-letter code: MAEEKKHYMTAEGKKKLEEELHYLITTRRKEVVERIKVARSFGDLSENSEYDSAKEDQAFVEGRIAQLEKMIRNAVMIENEKVDGNVVSLGKTVRLMELPDGEEEEYTIVGSAESDPFEGKISNDSPMAQSLLGKTVNDRVVVNTPGGEMEVEILEIR.

Residues 48 to 75 (NSEYDSAKEDQAFVEGRIAQLEKMIRNA) adopt a coiled-coil conformation.

The protein belongs to the GreA/GreB family.

In terms of biological role, necessary for efficient RNA polymerase transcription elongation past template-encoded arresting sites. The arresting sites in DNA have the property of trapping a certain fraction of elongating RNA polymerases that pass through, resulting in locked ternary complexes. Cleavage of the nascent transcript by cleavage factors such as GreA or GreB allows the resumption of elongation from the new 3'terminus. GreA releases sequences of 2 to 3 nucleotides. This chain is Transcription elongation factor GreA, found in Shouchella clausii (strain KSM-K16) (Alkalihalobacillus clausii).